The following is a 188-amino-acid chain: MPKRKKQNHHQPPTQQQPPLPEREETGDEEDGSPIGPPSLLGPPPMANGKPGDPKSALHRGPPGSRGPLIPPLLSLPPPPWGRGPIRRGLGPRSSPYGRGWWGVNAEPPFPGPGHGGPTRGSFHKEQRNPRRLKSWSLIKNTCPPKDDPQVMEDKSDRPVCRHFAKKGHCRYEDLCAFYHPGVNGPPL.

The tract at residues 1–157 (MPKRKKQNHH…DPQVMEDKSD (157 aa)) is disordered. Pro residues-rich tracts occupy residues 35–46 (IGPPSLLGPPPM) and 69–82 (LIPPLLSLPPPPWG). The segment covering 83–96 (RGPIRRGLGPRSSP) has biased composition (low complexity). Residues 145–157 (PKDDPQVMEDKSD) show a composition bias toward basic and acidic residues. A C3H1-type zinc finger spans residues 155–183 (KSDRPVCRHFAKKGHCRYEDLCAFYHPGV).

In Homo sapiens (Human), this protein is Proline-rich protein 3 (PRR3).